The sequence spans 296 residues: Acetyl-coenzyme A carboxylase carboxyl transferase subunit beta (296 aa).

The CoA carboxyltransferase N-terminal domain maps to 25–294 (VWTKCTACEQ…PFVEPELISE (270 aa)). Zn(2+)-binding residues include Cys-29, Cys-32, Cys-48, and Cys-51. Residues 29-51 (CTACEQVLYSEELKRNLYVCPKC) form a C4-type zinc finger.

The protein belongs to the AccD/PCCB family. As to quaternary structure, acetyl-CoA carboxylase is a heterohexamer composed of biotin carboxyl carrier protein (AccB), biotin carboxylase (AccC) and two subunits each of ACCase subunit alpha (AccA) and ACCase subunit beta (AccD). Requires Zn(2+) as cofactor.

It localises to the cytoplasm. The catalysed reaction is N(6)-carboxybiotinyl-L-lysyl-[protein] + acetyl-CoA = N(6)-biotinyl-L-lysyl-[protein] + malonyl-CoA. The protein operates within lipid metabolism; malonyl-CoA biosynthesis; malonyl-CoA from acetyl-CoA: step 1/1. Functionally, component of the acetyl coenzyme A carboxylase (ACC) complex. Biotin carboxylase (BC) catalyzes the carboxylation of biotin on its carrier protein (BCCP) and then the CO(2) group is transferred by the transcarboxylase to acetyl-CoA to form malonyl-CoA. The protein is Acetyl-coenzyme A carboxylase carboxyl transferase subunit beta of Haemophilus influenzae (strain 86-028NP).